We begin with the raw amino-acid sequence, 137 residues long: Protein MGF 110-7L (137 aa).

An N-terminal signal peptide occupies residues 1–20 (MLVIILGVIGLLASSNLVSS). 3 N-linked (GlcNAc...) asparagine; by host glycosylation sites follow: Asn-69, Asn-70, and Asn-105.

This sequence belongs to the asfaviruses V110 family.

The sequence is that of Protein MGF 110-7L from Ornithodoros (relapsing fever ticks).